A 155-amino-acid chain; its full sequence is Small ribosomal subunit protein uS7c (155 aa).

Belongs to the universal ribosomal protein uS7 family. In terms of assembly, part of the 30S ribosomal subunit.

The protein resides in the plastid. It is found in the chloroplast. Its function is as follows. One of the primary rRNA binding proteins, it binds directly to 16S rRNA where it nucleates assembly of the head domain of the 30S subunit. This Pinus thunbergii (Japanese black pine) protein is Small ribosomal subunit protein uS7c (rps7).